The following is a 258-amino-acid chain: Probable pectin methylesterase CGR3 (258 aa).

Residues 1–29 lie on the Cytoplasmic side of the membrane; that stretch reads MSRRQVRRVGDSGSFPFVGALHSKSRSSP. The helical transmembrane segment at 30 to 50 threads the bilayer; sequence LLSVCLVLVGACLLIGYAYSG. The Lumenal segment spans residues 51-258; that stretch reads PGMFKSIREV…CQVFHLKPLH (208 aa). A glycan (N-linked (GlcNAc...) asparagine) is linked at asparagine 171.

It belongs to the class I-like SAM-binding methyltransferase superfamily.

It localises to the golgi apparatus membrane. Its function is as follows. Together with CGR2, required for homogalacturonan pectins (HG) methylesterification in the Golgi apparatus prior to integration into cell walls, essential for general growth and development. Promotes petiole elongation. Impacts photosynthesis and respiration efficiency by influencing leaf mesophyll morphology and physiology; pectin methylesterification modulates both expansion and positioning of cells in leaves, probably by changing cell walls plasticity. This chain is Probable pectin methylesterase CGR3, found in Arabidopsis thaliana (Mouse-ear cress).